The chain runs to 118 residues: Heavy metal-associated isoprenylated plant protein 12 (118 aa).

Residues 1–65 (MQVVVLKLDV…KICHTEFISV (65 aa)) form the HMA domain. The segment at 68-87 (VKEPEKKKPDDPKKPETKPP) is disordered. Residues 69-86 (KEPEKKKPDDPKKPETKP) show a composition bias toward basic and acidic residues. Position 115 is a cysteine methyl ester (Cys115). Cys115 is lipidated: S-farnesyl cysteine. A propeptide spans 116–118 (VTS) (removed in mature form).

The protein belongs to the HIPP family.

Functionally, probable heavy-metal-binding protein. This Arabidopsis thaliana (Mouse-ear cress) protein is Heavy metal-associated isoprenylated plant protein 12.